Consider the following 141-residue polypeptide: Protein E6 (141 aa).

Zinc fingers lie at residues 27 to 64 (CRFC…CSSC) and 101 to 137 (CKFC…CRHC).

This sequence belongs to the papillomaviridae E6 protein family. As to quaternary structure, forms homodimers. Interacts with ubiquitin-protein ligase UBE3A/E6-AP; this interaction stimulates UBE3A ubiquitin activity. Interacts with host BAK1.

Its subcellular location is the host cytoplasm. It localises to the host nucleus. Its function is as follows. Plays a major role in the induction and maintenance of cellular transformation. E6 associates with host UBE3A/E6-AP ubiquitin-protein ligase and modulates its activity. Protects host keratinocytes from apoptosis by mediating the degradation of host BAK1. May also inhibit host immune response. The protein is Protein E6 of Human papillomavirus 15.